Consider the following 431-residue polypeptide: Neuronal pentraxin-2 (431 aa).

Residues 1–15 (MLALLAASVALAVAA) form the signal peptide. Residues Asn-148 and Asn-189 are each glycosylated (N-linked (GlcNAc...) asparagine). A Pentraxin (PTX) domain is found at 223–424 (DAFKVSLPLR…GASKWPVETC (202 aa)). Cysteines 253 and 313 form a disulfide. Ca(2+) is bound by residues Asn-277, Glu-355, Gln-356, Asp-357, and Gln-367. Asn-393 carries N-linked (GlcNAc...) asparagine glycosylation.

As to quaternary structure, homooligomer or heterooligomer (probably pentamer) with neuronal pentraxin receptor (NPTXR). Ca(2+) serves as cofactor. Brain, pancreas, liver, heart and skeletal muscle. Highest levels are seen in the testis.

It is found in the secreted. Functionally, likely to play role in the modification of cellular properties that underlie long-term plasticity. Binds to agar matrix in a calcium-dependent manner. This chain is Neuronal pentraxin-2 (NPTX2), found in Homo sapiens (Human).